A 118-amino-acid polypeptide reads, in one-letter code: Small ribosomal subunit protein bS6 (118 aa).

This sequence belongs to the bacterial ribosomal protein bS6 family.

Its function is as follows. Binds together with bS18 to 16S ribosomal RNA. This Saccharopolyspora erythraea (strain ATCC 11635 / DSM 40517 / JCM 4748 / NBRC 13426 / NCIMB 8594 / NRRL 2338) protein is Small ribosomal subunit protein bS6.